The primary structure comprises 346 residues: Mitogen-activated protein kinase kinase 1c (346 aa).

The Protein kinase domain maps to 70-332; it reads LELVRFLGKG…TTDLLKHPFL (263 aa). ATP contacts are provided by residues 76-84 and Lys99; that span reads LGKGAGGTV. Asp194 serves as the catalytic Proton acceptor.

Belongs to the protein kinase superfamily. STE Ser/Thr protein kinase family. MAP kinase kinase subfamily.

It catalyses the reaction L-seryl-[protein] + ATP = O-phospho-L-seryl-[protein] + ADP + H(+). It carries out the reaction L-threonyl-[protein] + ATP = O-phospho-L-threonyl-[protein] + ADP + H(+). The enzyme catalyses L-tyrosyl-[protein] + ATP = O-phospho-L-tyrosyl-[protein] + ADP + H(+). Functionally, the CERK1, MEKK1a/b, MKK1a/b/c and MPK4a/b proteins are involved in pathogen defense. The pathway induces rapid growth inhibition, cell wall depositions and accumulation of defense-related transcripts. This protein is required for full defense response to fungal pathogen chitin. This Physcomitrium patens (Spreading-leaved earth moss) protein is Mitogen-activated protein kinase kinase 1c.